The primary structure comprises 470 residues: Nuclear segregation protein BFR1 (470 aa).

Coiled coils occupy residues 17-178 and 237-281; these read DKKL…NGLN and NEFK…THAK. Phosphoserine is present on serine 260. A Phosphothreonine modification is found at threonine 336. The interval 346 to 368 is disordered; it reads APSKSKKYKKKNQQKNTENEQPA. Residues 349–358 show a composition bias toward basic residues; sequence KSKKYKKKNQ. Serine 369 bears the Phosphoserine mark. A coiled-coil region spans residues 398–469; that stretch reads NSDDVKITVE…EQEESEKDKE (72 aa). The segment at 447–470 is disordered; it reads QQVKKELEEKRLKEQEESEKDKEN.

Implicated in secretion, nuclear segregation and in maintenance of cell size. The sequence is that of Nuclear segregation protein BFR1 (BFR1) from Saccharomyces cerevisiae (strain ATCC 204508 / S288c) (Baker's yeast).